An 82-amino-acid polypeptide reads, in one-letter code: Small, acid-soluble spore protein gamma-type (82 aa).

Composition is skewed to polar residues over residues 1–24 (MANS…ASGQ) and 32–50 (ASET…SAAG). Positions 1–82 (MANSNNKTNA…SAEQNKQQNS (82 aa)) are disordered. Repeats lie at residues 19–45 (QSAS…KQNQ) and 46–72 (QSAA…QQNQ). The segment covering 69-82 (QQNQSAEQNKQQNS) has biased composition (low complexity).

The protein belongs to the gamma-type SASP family.

Functionally, SASP are bound to spore DNA. They are double-stranded DNA-binding proteins that cause DNA to change to an a-like conformation. They protect the DNA backbone from chemical and enzymatic cleavage and are thus involved in dormant spore's high resistance to UV light. The protein is Small, acid-soluble spore protein gamma-type of Bacillus subtilis.